The chain runs to 323 residues: 8-oxo-dGDP phosphatase NUDT18 (323 aa).

Positions 37–167 constitute a Nudix hydrolase domain; the sequence is RLRKNVCYVV…DILHLVELAA (131 aa). Leucine 58 serves as a coordination point for Mg(2+). The Nudix box signature appears at 76–97; the sequence is GRMEPGETIVEALQREVKEEAG.

It belongs to the Nudix hydrolase family. Mn(2+) is required as a cofactor. It depends on Mg(2+) as a cofactor.

The enzyme catalyses 8-oxo-dGDP + H2O = 8-oxo-dGMP + phosphate + H(+). It carries out the reaction 8-oxo-dADP + H2O = 8-oxo-dAMP + phosphate + H(+). It catalyses the reaction 2-oxo-dADP + H2O = 2-oxo-dAMP + phosphate + H(+). The catalysed reaction is 8-oxo-GDP + H2O = 8-oxo-GMP + phosphate + H(+). Mediates the hydrolysis of oxidized nucleoside diphosphate derivatives. Hydrolyzes 8-oxo-7,8-dihydroguanine (8-oxo-Gua)-containing deoxyribo- and ribonucleoside diphosphates to the monophosphates. Hydrolyzes 8-oxo-dGDP and 8-oxo-GDP with the same efficiencies. Also hydrolyzes 8-OH-dADP and 2-OH-dADP. Exhibited no or minimal hydrolysis activity against 8-oxo-dGTP, 8-oxo-GTP, dGTP, GTP, dGDP and GDP. Probably removes oxidized guanine nucleotides from both the DNA and RNA precursor pools. The protein is 8-oxo-dGDP phosphatase NUDT18 of Homo sapiens (Human).